A 524-amino-acid polypeptide reads, in one-letter code: MAQFNSTWAISGRRSAISVDTFHALSIQAPGLLLGTLLFYLFYKYTTRIYFHPLSGIPGPRLAAATHLYEAYYNILRQGLSKRAVQLHKAYNSPVIRLGTNRVHVGDPSYYHTIYNSGTDYHKDPGVYKLLGIDGSILTITDPEEHKQYRSIVGSLFSRKTADDLAPMMAALLNRSTESMARQGREGKPSVIQRIYRSVAADMVSYLLFNRPLGLIDSPQEADHYHSFMLSIDRFTAITWPRFYYPILNWVIDSFPAFVVERLQPGLRNLQELFKGWLDESIAAHDAGKPVESRSTYFDLMIEAKRKTGEPLRPDQLFDDILNYLVAGMEATSYVLSFGTYFLLNSPEAKAKLEAELLEASPFIREKFDHRRIMALPYLTAVVKECLRLSNTVPGFLPRVVPKGGVDIGGYHIPGGTQISMIHPVVELNEEIFPNPHEFIPERWLGDNGQDLEKWAIAFSKGRRQCIGKNLAYMMLYASIAVVFSRLEMELYETTAADMEIIDQFAPIIQGVVKVKITKDRWRE.

A helical membrane pass occupies residues 22 to 42 (FHALSIQAPGLLLGTLLFYLF). Cys-466 contributes to the heme binding site.

Belongs to the cytochrome P450 family. It depends on heme as a cofactor.

Its subcellular location is the membrane. The catalysed reaction is cyclo(L-arginyl-tyrosyl) + reduced [NADPH--hemoprotein reductase] + O2 = cyclo(L-arginyl-L-dehydrotyrosyl) + oxidized [NADPH--hemoprotein reductase] + 2 H2O + H(+). The protein operates within alkaloid biosynthesis. In terms of biological role, cytochrome P450 monooxygenase; part of the ank cluster that mediates the biosynthesis of NK13650 C, a highly modified cyclo-arginine-tyrosine dipeptide. AnkB is responsible for desaturation of the ankA product cyclo-Arg-Tyr diketopiperazine, likely through hydroxylation of the benzylic position followed by dehydration to yield a dehydro-cyclodipeptide. Within the pathway, the cyclodipeptide synthase ankA acts as the scaffold-generating enzyme and is responsible for formation of the cyclo-Arg-Tyr diketopiperazine (cRY) from L-Arg and L-Tyr. The ankA product cRY is desaturated by the cytochrome P450 monooxygenase ankB to yield a dehydro-cyclodipeptide intermediate. The FAD-dependent monooxygenase ankC then installs the m-OH, ankD catalyzes the attachment of L-homoserine, and ankE ligates citrate to the ankD product to yield NK13650 B. The O-methyltransferase ankF is responsible for methylation of the C-17 phenol group of NK13650 B to produce NK13650 D. Amidation of NK13650 D with L-Asp by ankG then leads to the production of NK13650 C, whereas amidation of NK13650 B produces NK13650 A. The polypeptide is Cytochrome P450 monooxygenase ankB (Aspergillus thermomutatus (Neosartorya pseudofischeri)).